Here is a 506-residue protein sequence, read N- to C-terminus: Cytochrome P450 monooxygenase atr2 (506 aa).

Residues 18–38 (VFAGLVLASLLTTTYCIWNIF) traverse the membrane as a helical segment. Position 451 (cysteine 451) interacts with heme.

It belongs to the cytochrome P450 family. Requires heme as cofactor.

The protein resides in the membrane. It carries out the reaction 4-O-demethylbarbatate + reduced [NADPH--hemoprotein reductase] + O2 = proatranorin II + oxidized [NADPH--hemoprotein reductase] + H2O + H(+). The enzyme catalyses proatranorin II + reduced [NADPH--hemoprotein reductase] + O2 = proatranorin III + oxidized [NADPH--hemoprotein reductase] + 2 H2O + H(+). The catalysed reaction is proatranorin I + reduced [NADPH--hemoprotein reductase] + O2 = proatranorin IV + oxidized [NADPH--hemoprotein reductase] + H2O + H(+). It catalyses the reaction proatranorin IV + reduced [NADPH--hemoprotein reductase] + O2 = atranorin + oxidized [NADPH--hemoprotein reductase] + 2 H2O + H(+). Its pathway is secondary metabolite biosynthesis; terpenoid biosynthesis. Functionally, cytochrome P450 monooxygenase; part of the gene cluster that mediates the biosynthesis of atranorin, a depside of polyketide origin that accumulates in the cortical or medullary layers of lichen thalli. Atr2 performs the oxidation at the C-9 position of 4-O-demethylbarbatic acid to yield proatranorin III via proatranorin II. Atr2 is also able to oxidize the atr3 product proatranorin I to produce the final compound atranorin. The first step in the pathway is performed by the non-reducing polyketide synthase atr1 that produces 4-O-demethylbarbatic acid composed of two 3-methylorsellinic acid (3MOA) moieties. The pathway continues with the actions of the cytochrome P450 monooygenase atr2 that catalizes the oxidation of c-9 and the O-methyltransferase atr3 that performs the methylation of the carboxyl group to yield atranorin, via the proatranorin II and III intermediates if atr2 acts first, or the proatranorin I intermediate if atr3 acts first. In Stereocaulon alpinum (Alpine snow lichen), this protein is Cytochrome P450 monooxygenase atr2.